Here is a 146-residue protein sequence, read N- to C-terminus: uncharacterized protein (146 aa).

An HTH marR-type domain is found at 1 to 137 (MLSQEFFNSF…TINVMNQIHE (137 aa)).

This is an uncharacterized protein from Staphylococcus aureus (strain N315).